We begin with the raw amino-acid sequence, 512 residues long: Multidrug resistance protein 3 (512 aa).

14 consecutive transmembrane segments (helical) span residues 13–33 (FVVL…TIVA), 48–68 (KFAW…PIYG), 79–99 (FFLF…IAQT), 109–129 (IQGI…FDLF), 139–159 (GMFG…GAII), 163–183 (ISWH…LFFI), 200–220 (WGGA…LELG), 228–248 (SIQI…FFIV), 272–292 (ILAF…PIFV), 304–324 (GFIL…GGIF), 333–353 (LMLI…NMTP), 358–378 (VWLT…FSLL), 399–421 (SFLR…TNVF), and 475–495 (ITYV…TILF).

It belongs to the major facilitator superfamily. EmrB family.

The protein resides in the cell membrane. Functionally, confers resistance to puromycin, tosufloxacin and norfloxacin. In Bacillus subtilis (strain 168), this protein is Multidrug resistance protein 3 (bmr3).